Reading from the N-terminus, the 86-residue chain is Putative defensin-like protein 244 (86 aa).

An N-terminal signal peptide occupies residues 1–22 (MKGIAMLLVSCLLFSFLSTNLA). 4 cysteine pairs are disulfide-bonded: Cys-28–Cys-83, Cys-38–Cys-67, Cys-48–Cys-77, and Cys-65–Cys-79.

It belongs to the DEFL family.

The protein resides in the secreted. This chain is Putative defensin-like protein 244 (SCRL11), found in Arabidopsis thaliana (Mouse-ear cress).